The following is a 135-amino-acid chain: S-protein homolog 7 (135 aa).

The N-terminal stretch at 1 to 20 (MNNLFVLVIIIVLSAGSNNG) is a signal peptide.

This sequence belongs to the plant self-incompatibility (S1) protein family.

The protein localises to the secreted. The chain is S-protein homolog 7 from Arabidopsis thaliana (Mouse-ear cress).